The sequence spans 420 residues: Phosphoribosylamine--glycine ligase (420 aa).

Residues 108 to 314 form the ATP-grasp domain; sequence KQFMEKYAIP…FAALIAALLN (207 aa). An ATP-binding site is contributed by 134 to 195; that stretch reads LDERGVPIVI…EDFLAGEEFS (62 aa). Positions 284 and 286 each coordinate Mg(2+).

Belongs to the GARS family. It depends on Mg(2+) as a cofactor. Requires Mn(2+) as cofactor.

It catalyses the reaction 5-phospho-beta-D-ribosylamine + glycine + ATP = N(1)-(5-phospho-beta-D-ribosyl)glycinamide + ADP + phosphate + H(+). It functions in the pathway purine metabolism; IMP biosynthesis via de novo pathway; N(1)-(5-phospho-D-ribosyl)glycinamide from 5-phospho-alpha-D-ribose 1-diphosphate: step 2/2. This is Phosphoribosylamine--glycine ligase from Listeria innocua serovar 6a (strain ATCC BAA-680 / CLIP 11262).